We begin with the raw amino-acid sequence, 833 residues long: DNA gyrase subunit A (833 aa).

Positions 34–500 (LPDVRDGLKP…AGDVRDIEDI (467 aa)) constitute a Topo IIA-type catalytic domain. The active-site O-(5'-phospho-DNA)-tyrosine intermediate is the Tyr122. Residues 527-533 (QKRGGQG) carry the GyrA-box motif.

Belongs to the type II topoisomerase GyrA/ParC subunit family. As to quaternary structure, heterotetramer, composed of two GyrA and two GyrB chains. In the heterotetramer, GyrA contains the active site tyrosine that forms a transient covalent intermediate with DNA, while GyrB binds cofactors and catalyzes ATP hydrolysis.

The protein localises to the cytoplasm. It catalyses the reaction ATP-dependent breakage, passage and rejoining of double-stranded DNA.. In terms of biological role, a type II topoisomerase that negatively supercoils closed circular double-stranded (ds) DNA in an ATP-dependent manner to modulate DNA topology and maintain chromosomes in an underwound state. Negative supercoiling favors strand separation, and DNA replication, transcription, recombination and repair, all of which involve strand separation. Also able to catalyze the interconversion of other topological isomers of dsDNA rings, including catenanes and knotted rings. Type II topoisomerases break and join 2 DNA strands simultaneously in an ATP-dependent manner. The protein is DNA gyrase subunit A of Chlamydia muridarum (strain MoPn / Nigg).